Reading from the N-terminus, the 397-residue chain is Lysosomal acid lipase/cholesteryl ester hydrolase (397 aa).

The first 25 residues, 1–25, serve as a signal peptide directing secretion; that stretch reads MQLLGRVICFVVGILLSGGPTGTIS. A propeptide spans 26-72 (removed in mature form); sequence AVDPEANMNVTEIIMHWGYPEHSVQTGDGYILGVHRIPHGRKNQFDK. Residues Asn34, Asn99, and Asn159 are each glycosylated (N-linked (GlcNAc...) asparagine). In terms of domain architecture, AB hydrolase-1 spans 84–378; that stretch reads HGFLADSSNW…EWDHLDFIWG (295 aa). Ser172 serves as the catalytic Charge relay system. N-linked (GlcNAc...) asparagine glycosylation is found at Asn271 and Asn319. The active-site Charge relay system is the His372.

This sequence belongs to the AB hydrolase superfamily. Lipase family. As to quaternary structure, monomer. Post-translationally, glycosylation is not essential for catalytic activity.

Its subcellular location is the lysosome. It catalyses the reaction a sterol ester + H2O = a sterol + a fatty acid + H(+). The catalysed reaction is cholesteryl (9Z-octadecenoate) + H2O = cholesterol + (9Z)-octadecenoate + H(+). The enzyme catalyses a triacylglycerol + H2O = a 1,2-diacylglycerol + a fatty acid + H(+). It carries out the reaction 1,2-di-(9Z-octadecenoyl)-glycerol + (9Z)-octadecenoate + H(+) = 1,2,3-tri-(9Z-octadecenoyl)-glycerol + H2O. It catalyses the reaction a 1,2-diacylglycerol + H2O = a 1-acylglycerol + a fatty acid + H(+). The catalysed reaction is 1,2-di-(9Z-octadecenoyl)-glycerol + H2O = 1-(9Z-octadecenoyl)-glycerol + (9Z)-octadecenoate + H(+). The enzyme catalyses a 1,3-diacylglycerol + H2O = a 1-acylglycerol + a fatty acid + H(+). It carries out the reaction 1,3-di-(9Z-octadecenoyl)-glycerol + H2O = 1-(9Z-octadecenoyl)-glycerol + (9Z)-octadecenoate + H(+). In terms of biological role, catalyzes the deacylation of cholesteryl ester core lipids of endocytosed low density lipoproteins to generate free fatty acids and cholesterol. Hydrolyzes triglycerides (1,2,3-triacylglycerol) and diglycerides (such as 1,2-diacylglycerol and 1,3-diacylglycerol) with preference for the acyl moieties at the sn-1 or sn-3 positions. This chain is Lysosomal acid lipase/cholesteryl ester hydrolase (Lipa), found in Rattus norvegicus (Rat).